The sequence spans 596 residues: uncharacterized protein (596 aa).

2 stretches are compositionally biased toward basic residues: residues 1 to 10 (MRLRSQKRGN) and 18 to 29 (KTRKGKGKKLKP). A disordered region spans residues 1-30 (MRLRSQKRGNKFVALPAKTRKGKGKKLKPK).

This is an uncharacterized protein from Magallana gigas (Pacific oyster).